Here is a 388-residue protein sequence, read N- to C-terminus: Chorismate synthase (388 aa).

R39 and R45 together coordinate NADP(+). FMN-binding positions include 130–132 (RSS), 251–252 (NA), G296, 311–315 (KPIPT), and R337.

It belongs to the chorismate synthase family. Homotetramer. FMNH2 serves as cofactor.

It carries out the reaction 5-O-(1-carboxyvinyl)-3-phosphoshikimate = chorismate + phosphate. Its pathway is metabolic intermediate biosynthesis; chorismate biosynthesis; chorismate from D-erythrose 4-phosphate and phosphoenolpyruvate: step 7/7. Its function is as follows. Catalyzes the anti-1,4-elimination of the C-3 phosphate and the C-6 proR hydrogen from 5-enolpyruvylshikimate-3-phosphate (EPSP) to yield chorismate, which is the branch point compound that serves as the starting substrate for the three terminal pathways of aromatic amino acid biosynthesis. This reaction introduces a second double bond into the aromatic ring system. This chain is Chorismate synthase, found in Geobacillus sp. (strain WCH70).